The following is a 123-amino-acid chain: Small ribosomal subunit protein uS12 (123 aa).

Asp89 is modified (3-methylthioaspartic acid).

It belongs to the universal ribosomal protein uS12 family. Part of the 30S ribosomal subunit. Contacts proteins S8 and S17. May interact with IF1 in the 30S initiation complex.

With S4 and S5 plays an important role in translational accuracy. Its function is as follows. Interacts with and stabilizes bases of the 16S rRNA that are involved in tRNA selection in the A site and with the mRNA backbone. Located at the interface of the 30S and 50S subunits, it traverses the body of the 30S subunit contacting proteins on the other side and probably holding the rRNA structure together. The combined cluster of proteins S8, S12 and S17 appears to hold together the shoulder and platform of the 30S subunit. This is Small ribosomal subunit protein uS12 from Rhodopseudomonas palustris (strain BisB18).